The primary structure comprises 303 residues: Coenzyme PQQ synthesis protein B (303 aa).

It belongs to the PqqB family.

Its pathway is cofactor biosynthesis; pyrroloquinoline quinone biosynthesis. Functionally, may be involved in the transport of PQQ or its precursor to the periplasm. The sequence is that of Coenzyme PQQ synthesis protein B from Pseudomonas fluorescens (strain Pf0-1).